A 139-amino-acid polypeptide reads, in one-letter code: Ribulose bisphosphate carboxylase small subunit (139 aa).

The protein belongs to the RuBisCO small chain family. As to quaternary structure, heterohexadecamer of 8 large and 8 small subunits.

It is found in the plastid. The protein resides in the chloroplast. Functionally, ruBisCO catalyzes two reactions: the carboxylation of D-ribulose 1,5-bisphosphate, the primary event in carbon dioxide fixation, as well as the oxidative fragmentation of the pentose substrate in the photorespiration process. Both reactions occur simultaneously and in competition at the same active site. Although the small subunit is not catalytic it is essential for maximal activity. The protein is Ribulose bisphosphate carboxylase small subunit of Thalassiosira nordenskioeldii (Marine diatom).